The primary structure comprises 234 residues: Sugar fermentation stimulation protein homolog (234 aa).

It belongs to the SfsA family.

The protein is Sugar fermentation stimulation protein homolog of Bartonella quintana (strain Toulouse) (Rochalimaea quintana).